We begin with the raw amino-acid sequence, 143 residues long: Large ribosomal subunit protein uL11 (143 aa).

This sequence belongs to the universal ribosomal protein uL11 family. As to quaternary structure, part of the ribosomal stalk of the 50S ribosomal subunit. Interacts with L10 and the large rRNA to form the base of the stalk. L10 forms an elongated spine to which L12 dimers bind in a sequential fashion forming a multimeric L10(L12)X complex. In terms of processing, one or more lysine residues are methylated.

Its function is as follows. Forms part of the ribosomal stalk which helps the ribosome interact with GTP-bound translation factors. This chain is Large ribosomal subunit protein uL11, found in Methylibium petroleiphilum (strain ATCC BAA-1232 / LMG 22953 / PM1).